The following is a 51-amino-acid chain: Large ribosomal subunit protein eL39x (51 aa).

Belongs to the eukaryotic ribosomal protein eL39 family.

The protein is Large ribosomal subunit protein eL39x (RPL39C) of Oryza sativa subsp. japonica (Rice).